We begin with the raw amino-acid sequence, 351 residues long: V-type proton ATPase subunit d1 (351 aa).

The protein belongs to the V-ATPase V0D/AC39 subunit family. V-ATPase is a heteromultimeric enzyme composed of a peripheral catalytic V1 complex (components A to H) attached to an integral membrane V0 proton pore complex (components: a, c, c'', d and e).

It is found in the vacuole membrane. Its function is as follows. Subunit of the integral membrane V0 complex of vacuolar ATPase. Vacuolar ATPase is responsible for acidifying a variety of intracellular compartments in eukaryotic cells, thus providing most of the energy required for transport processes in the vacuolar system. In Arabidopsis thaliana (Mouse-ear cress), this protein is V-type proton ATPase subunit d1 (VHA-d1).